The chain runs to 72 residues: Putative snRNP Sm-like protein (72 aa).

The region spanning 4-72 (RPLDILNNAL…RGDNVVYVSP (69 aa)) is the Sm domain.

The protein belongs to the snRNP Sm proteins family.

This Methanosarcina acetivorans (strain ATCC 35395 / DSM 2834 / JCM 12185 / C2A) protein is Putative snRNP Sm-like protein.